We begin with the raw amino-acid sequence, 404 residues long: Retrotransposable element SLACS 45 kDa protein (404 aa).

Composition is skewed to polar residues over residues 1–11 (MVRNLRSSEPQ) and 29–41 (PALN…QKQV). Disordered stretches follow at residues 1–62 (MVRN…NTSI), 86–111 (KKAA…GRPP), 134–251 (LGKG…KKGA), 317–341 (CRQQ…GAVS), and 369–404 (PKLP…AGPP). Residues 98–111 (VNKEGNRKKYGRPP) are compositionally biased toward basic and acidic residues. Residues 141–151 (TAHTKSNQSRV) show a composition bias toward polar residues. The C2H2-type zinc finger occupies 300–321 (CPVCGFAHPEETITVTHCRQQH). Over residues 395-404 (HHCDRSAGPP) the composition is skewed to basic and acidic residues.

This chain is Retrotransposable element SLACS 45 kDa protein, found in Trypanosoma brucei gambiense.